Here is a 236-residue protein sequence, read N- to C-terminus: Predicted GPI-anchored protein 43 (236 aa).

The N-terminal stretch at 1–24 (MHQRNHHSILLTLLLYLQSIVALA) is a signal peptide. Asn192, Asn195, and Asn198 each carry an N-linked (GlcNAc...) asparagine glycan. The GPI-anchor amidated glycine moiety is linked to residue Gly208. Residues 209 to 236 (SVCLTSSYLNSPIIILCAILTGTLFAMY) constitute a propeptide, removed in mature form.

Its subcellular location is the cell membrane. This Candida albicans (strain SC5314 / ATCC MYA-2876) (Yeast) protein is Predicted GPI-anchored protein 43 (PGA43).